Reading from the N-terminus, the 89-residue chain is Large ribosomal subunit protein bL31B (89 aa).

Belongs to the bacterial ribosomal protein bL31 family. Type B subfamily. In terms of assembly, part of the 50S ribosomal subunit.

The polypeptide is Large ribosomal subunit protein bL31B (Actinobacillus pleuropneumoniae serotype 5b (strain L20)).